Consider the following 412-residue polypeptide: Multifunctional CCA protein (412 aa).

ATP is bound by residues Gly-8 and Arg-11. Gly-8 and Arg-11 together coordinate CTP. 2 residues coordinate Mg(2+): Glu-21 and Asp-23. The ATP site is built by Arg-91, Arg-137, and Arg-140. CTP is bound by residues Arg-91, Arg-137, and Arg-140. One can recognise an HD domain in the interval 228–329 (TGIHTLMTLA…LKLFNAIDVW (102 aa)).

Belongs to the tRNA nucleotidyltransferase/poly(A) polymerase family. Bacterial CCA-adding enzyme type 1 subfamily. As to quaternary structure, monomer. Can also form homodimers and oligomers. It depends on Mg(2+) as a cofactor. Ni(2+) is required as a cofactor.

The enzyme catalyses a tRNA precursor + 2 CTP + ATP = a tRNA with a 3' CCA end + 3 diphosphate. It carries out the reaction a tRNA with a 3' CCA end + 2 CTP + ATP = a tRNA with a 3' CCACCA end + 3 diphosphate. In terms of biological role, catalyzes the addition and repair of the essential 3'-terminal CCA sequence in tRNAs without using a nucleic acid template. Adds these three nucleotides in the order of C, C, and A to the tRNA nucleotide-73, using CTP and ATP as substrates and producing inorganic pyrophosphate. tRNA 3'-terminal CCA addition is required both for tRNA processing and repair. Also involved in tRNA surveillance by mediating tandem CCA addition to generate a CCACCA at the 3' terminus of unstable tRNAs. While stable tRNAs receive only 3'-terminal CCA, unstable tRNAs are marked with CCACCA and rapidly degraded. The protein is Multifunctional CCA protein of Yersinia pestis.